We begin with the raw amino-acid sequence, 408 residues long: L-lactate oxidase (408 aa).

In terms of domain architecture, FMN hydroxy acid dehydrogenase spans 14–370; it reads NEAIKMVNVD…KHADIRQINY (357 aa). Residue Tyr-40 participates in pyruvate binding. Residues 93–95, Ser-122, and Gln-144 each bind FMN; that span reads PIA. Tyr-146 serves as a coordination point for pyruvate. An FMN-binding site is contributed by Thr-172. Arg-181 provides a ligand contact to pyruvate. Residues Lys-241 and Ser-263 each contribute to the FMN site. His-265 and Arg-268 together coordinate pyruvate. His-265 (proton acceptor) is an active-site residue. FMN is bound by residues 296 to 300 and Arg-320; that span reads DSGVR.

This sequence belongs to the FMN-dependent alpha-hydroxy acid dehydrogenase family. Homotetramer. FMN serves as cofactor.

It catalyses the reaction a (2S)-2-hydroxycarboxylate + O2 = a 2-oxocarboxylate + H2O2. The catalysed reaction is (S)-lactate + O2 = pyruvate + H2O2. It carries out the reaction 2-hydroxyoctanoate + O2 = 2-oxooctanoate + H2O2. The enzyme catalyses glycolate + O2 = glyoxylate + H2O2. It catalyses the reaction mandelate + O2 = phenylglyoxylate + H2O2. The catalysed reaction is 2-hydroxyoctadecanoate + O2 = 2-oxooctadecanoate + H2O2. Functionally, oxidase that catalyzes the oxidation of a broad range of 2-hydroxyacids in vitro, such as (S)-lactate, 2-hydroxyoctanoate, and to a lesser extent glycolate, mandelate and 2-hydroxyoctadecanoate, to the corresponding 2-oxoacids, with a reduction of O2 to H2O2. May be involved in the utilization of L-lactate as an energy source for growth. The sequence is that of L-lactate oxidase from Lactobacillus jensenii.